The primary structure comprises 206 residues: A-type ATP synthase subunit D (206 aa).

Belongs to the V-ATPase D subunit family. Has multiple subunits with at least A(3), B(3), C, D, E, F, H, I and proteolipid K(x).

It localises to the cell membrane. Its function is as follows. Component of the A-type ATP synthase that produces ATP from ADP in the presence of a proton gradient across the membrane. This chain is A-type ATP synthase subunit D, found in Methanococcoides burtonii (strain DSM 6242 / NBRC 107633 / OCM 468 / ACE-M).